Consider the following 591-residue polypeptide: Aspartate--tRNA(Asp/Asn) ligase (591 aa).

Residue glutamate 175 participates in L-aspartate binding. Positions 199–202 (QQFK) are aspartate. L-aspartate-binding residues include arginine 221 and histidine 453. 221-223 (RDE) lines the ATP pocket. Glutamate 486 contributes to the ATP binding site. An L-aspartate-binding site is contributed by arginine 493. 538 to 541 (GIDR) provides a ligand contact to ATP.

Belongs to the class-II aminoacyl-tRNA synthetase family. Type 1 subfamily. In terms of assembly, homodimer.

It localises to the cytoplasm. It carries out the reaction tRNA(Asx) + L-aspartate + ATP = L-aspartyl-tRNA(Asx) + AMP + diphosphate. In terms of biological role, aspartyl-tRNA synthetase with relaxed tRNA specificity since it is able to aspartylate not only its cognate tRNA(Asp) but also tRNA(Asn). Reaction proceeds in two steps: L-aspartate is first activated by ATP to form Asp-AMP and then transferred to the acceptor end of tRNA(Asp/Asn). In Paracoccus denitrificans (strain Pd 1222), this protein is Aspartate--tRNA(Asp/Asn) ligase.